Here is a 240-residue protein sequence, read N- to C-terminus: PF03932 family protein CutC (240 aa).

The protein belongs to the CutC family.

It is found in the cytoplasm. In Xanthomonas axonopodis pv. citri (strain 306), this protein is PF03932 family protein CutC.